A 419-amino-acid polypeptide reads, in one-letter code: Pygopus homolog 1 (419 aa).

2 disordered regions span residues 1 to 64 (MPAE…PNSD) and 175 to 338 (HFRQ…SSSD). Over residues 18 to 30 (GDSGLDGLGGPGV) the composition is skewed to gly residues. The Nuclear localization signal motif lies at 35 to 41 (PDKKKRK). Polar residues-rich tracts occupy residues 175-221 (HFRQ…SNHS) and 240-255 (DFTQGATKNTNQNSSA). Residues 276–286 (VNRNNAVNQEN) show a composition bias toward low complexity. Positions 287 to 307 (SRSSSTEATNNNPANGTQNKP) are enriched in polar residues. Residues 340 to 398 (VYPCGICTNEVNDDQDAILCEASCQKWFHRICTGMTETAYGLLTAEASAVWGCDTCMAD) form a PHD-type zinc finger. The interval 341–388 (YPCGICTNEVNDDQDAILCEASCQKWFHRICTGMTETAYGLLTAEASA) is interaction with H3K4me2. The interval 373 to 391 (GMTETAYGLLTAEASAVWG) is interaction with BCL9.

As to quaternary structure, interacts with BCL9 via The PHD-type zinc finger motiv, and thereby becomes part of the nuclear beta-catenin/TCF complex. Identified in a complex with BCL9L, CDC73, CTNNB1 and PYGO1. Interacts with histone H3 mono-, di- or tri-methylated at 'Lys4' (H3K4me1, H3K4me2, H3K4me3); the interaction is enhanced by the interaction with BCL9.

Its subcellular location is the nucleus. Its function is as follows. Involved in signal transduction through the Wnt pathway. This is Pygopus homolog 1 (PYGO1) from Homo sapiens (Human).